The following is a 571-amino-acid chain: Glutamate--tRNA ligase (571 aa).

The short motif at 38 to 48 (PSPTGFMHIGG) is the 'HIGH' region element. The 'KMSKS' region signature appears at 316–320 (KLSKR). An ATP-binding site is contributed by Lys319.

This sequence belongs to the class-I aminoacyl-tRNA synthetase family. Glutamate--tRNA ligase type 1 subfamily. As to quaternary structure, monomer.

Its subcellular location is the cytoplasm. The enzyme catalyses tRNA(Glu) + L-glutamate + ATP = L-glutamyl-tRNA(Glu) + AMP + diphosphate. In terms of biological role, catalyzes the attachment of glutamate to tRNA(Glu) in a two-step reaction: glutamate is first activated by ATP to form Glu-AMP and then transferred to the acceptor end of tRNA(Glu). The polypeptide is Glutamate--tRNA ligase (Sorangium cellulosum (strain So ce56) (Polyangium cellulosum (strain So ce56))).